The sequence spans 450 residues: Crh-like protein 4 (450 aa).

The signal sequence occupies residues 1 to 21 (MRLSLVGVAIGLLSSSAIVTA). A disulfide bond links C27 and C34. Positions 46-228 (YDFTKGSSPD…WAGGETDYSA (183 aa)) constitute a GH16 domain. E119 functions as the Nucleophile in the catalytic mechanism. E123 functions as the Proton donor in the catalytic mechanism. Chitin contacts are provided by E123, K201, W205, and T216. N383 is a glycosylation site (N-linked (GlcNAc...) asparagine).

This sequence belongs to the glycosyl hydrolase 16 family. CRH1 subfamily. The GPI-like anchor contains a phosphoceramide lipid group. The anchor position has not been determined.

The protein localises to the cell membrane. Its subcellular location is the secreted. It is found in the cell wall. It catalyses the reaction Random endo-hydrolysis of N-acetyl-beta-D-glucosaminide (1-&gt;4)-beta-linkages in chitin and chitodextrins.. Functionally, dual chitinase/transglycosylase that plays a role in cell wall architecture. Chitinase and transglycosylase activities are coupled. Required for the polysaccharide cross-linking at the septa and the cell wall. More specifically, transfers chitin to 1,6-beta-glucan in the cell wall. The chain is Crh-like protein 4 from Aspergillus fumigatus (strain ATCC MYA-4609 / CBS 101355 / FGSC A1100 / Af293) (Neosartorya fumigata).